The following is a 358-amino-acid chain: 4-hydroxy-3-methylbut-2-en-1-yl diphosphate synthase (flavodoxin) (358 aa).

[4Fe-4S] cluster-binding residues include cysteine 270, cysteine 273, cysteine 305, and glutamate 312.

Belongs to the IspG family. The cofactor is [4Fe-4S] cluster.

The enzyme catalyses (2E)-4-hydroxy-3-methylbut-2-enyl diphosphate + oxidized [flavodoxin] + H2O + 2 H(+) = 2-C-methyl-D-erythritol 2,4-cyclic diphosphate + reduced [flavodoxin]. It functions in the pathway isoprenoid biosynthesis; isopentenyl diphosphate biosynthesis via DXP pathway; isopentenyl diphosphate from 1-deoxy-D-xylulose 5-phosphate: step 5/6. In terms of biological role, converts 2C-methyl-D-erythritol 2,4-cyclodiphosphate (ME-2,4cPP) into 1-hydroxy-2-methyl-2-(E)-butenyl 4-diphosphate. In Vesicomyosocius okutanii subsp. Calyptogena okutanii (strain HA), this protein is 4-hydroxy-3-methylbut-2-en-1-yl diphosphate synthase (flavodoxin).